The following is a 183-amino-acid chain: Small ribosomal subunit protein uS4c (183 aa).

An S4 RNA-binding domain is found at 82–143; the sequence is MRLDNILFRL…KQRSKALIQN (62 aa).

The protein belongs to the universal ribosomal protein uS4 family. Part of the 30S ribosomal subunit. Contacts protein S5. The interaction surface between S4 and S5 is involved in control of translational fidelity.

The protein resides in the plastid. It localises to the chloroplast. Its function is as follows. One of the primary rRNA binding proteins, it binds directly to 16S rRNA where it nucleates assembly of the body of the 30S subunit. Functionally, with S5 and S12 plays an important role in translational accuracy. The chain is Small ribosomal subunit protein uS4c (rps4) from Babiana stricta (Baboon flower).